The primary structure comprises 497 residues: Angiopoietin-1 (497 aa).

An N-terminal signal peptide occupies residues 1-15 (MTVFLSFAFLAAILT). Residues Asn92, Asn122, Asn154, Asn243, and Asn294 are each glycosylated (N-linked (GlcNAc...) asparagine). Residues 153-261 (LNQTSRLEIQ…LELMDTVHNL (109 aa)) adopt a coiled-coil conformation. The region spanning 276-496 (KEEEKPFRDC…STTMMIRPLD (221 aa)) is the Fibrinogen C-terminal domain. Cystine bridges form between Cys285–Cys314 and Cys438–Cys451.

In terms of assembly, homooligomer. Interacts with TEK/TIE2. Interacts with SVEP1/polydom. Interacts with THBD; this interaction significantly inhibits the generation of activated PC and TAFIa/CPB2 by the thrombin/thrombomodulin complex.

The protein resides in the secreted. Functionally, binds and activates TIE2 receptor by inducing its tyrosine phosphorylation. Implicated in endothelial developmental processes later and distinct from that of VEGF. Appears to play a crucial role in mediating reciprocal interactions between the endothelium and surrounding matrix and mesenchyme. Mediates blood vessel maturation/stability. It may play an important role in the heart early development. The chain is Angiopoietin-1 (ANGPT1) from Bos taurus (Bovine).